Consider the following 192-residue polypeptide: Iron sulfur cluster assembly protein 1, mitochondrial (192 aa).

A mitochondrion-targeting transit peptide spans 1 to 53 (MSVFRRSVQCVGVLPSILAQRSSLLARPANLQFLKTNSSKFVPQVTANVSRRM).

This sequence belongs to the NifU family. Homodimer. Component of the core Fe-S cluster (ISC) assembly machinery. [2Fe-2S] cluster is required as a cofactor.

The protein localises to the mitochondrion. The protein resides in the mitochondrion matrix. Its pathway is cofactor biosynthesis; iron-sulfur cluster biosynthesis. In terms of biological role, scaffold protein for the de novo synthesis of iron-sulfur (Fe-S) clusters within mitochondria, which is required for maturation of both mitochondrial and cytoplasmic [2Fe-2S] and [4Fe-4S] proteins. First, a [2Fe-2S] cluster is transiently assembled on the scaffold protein isu1. In a second step, the cluster is released from isu1, transferred to a glutaredoxin, followed by the formation of mitochondrial [2Fe-2S] proteins, the synthesis of [4Fe-4S] clusters and their target-specific insertion into the recipient apoproteins. Cluster assembly on isu1 depends on the function of the cysteine desulfurase complex nfs1-isd11, which serves as the sulfur donor for cluster synthesis, the iron-binding protein frataxin as the putative iron donor, and the electron transfer chain comprised of ferredoxin reductase and ferredoxin, which receive their electrons from NADH. This Schizosaccharomyces pombe (strain 972 / ATCC 24843) (Fission yeast) protein is Iron sulfur cluster assembly protein 1, mitochondrial (isu1).